The chain runs to 227 residues: Enolase-phosphatase E1 (227 aa).

It belongs to the HAD-like hydrolase superfamily. MasA/MtnC family. Monomer. Mg(2+) serves as cofactor.

The catalysed reaction is 5-methylsulfanyl-2,3-dioxopentyl phosphate + H2O = 1,2-dihydroxy-5-(methylsulfanyl)pent-1-en-3-one + phosphate. Its pathway is amino-acid biosynthesis; L-methionine biosynthesis via salvage pathway; L-methionine from S-methyl-5-thio-alpha-D-ribose 1-phosphate: step 3/6. The protein operates within amino-acid biosynthesis; L-methionine biosynthesis via salvage pathway; L-methionine from S-methyl-5-thio-alpha-D-ribose 1-phosphate: step 4/6. Bifunctional enzyme that catalyzes the enolization of 2,3-diketo-5-methylthiopentyl-1-phosphate (DK-MTP-1-P) into the intermediate 2-hydroxy-3-keto-5-methylthiopentenyl-1-phosphate (HK-MTPenyl-1-P), which is then dephosphorylated to form the acireductone 1,2-dihydroxy-3-keto-5-methylthiopentene (DHK-MTPene). The polypeptide is Enolase-phosphatase E1 (Persephonella marina (strain DSM 14350 / EX-H1)).